A 118-amino-acid polypeptide reads, in one-letter code: Basic phospholipase A2 acanthin-2 (118 aa).

7 disulfides stabilise this stretch: cysteine 11–cysteine 71, cysteine 27–cysteine 117, cysteine 29–cysteine 45, cysteine 44–cysteine 98, cysteine 51–cysteine 91, cysteine 60–cysteine 84, and cysteine 78–cysteine 89. Ca(2+)-binding residues include tyrosine 28, glycine 30, and glycine 32. Histidine 48 is an active-site residue. A Ca(2+)-binding site is contributed by aspartate 49. The active site involves aspartate 92.

The cofactor is Ca(2+). Expressed by the venom gland.

The protein resides in the secreted. The enzyme catalyses a 1,2-diacyl-sn-glycero-3-phosphocholine + H2O = a 1-acyl-sn-glycero-3-phosphocholine + a fatty acid + H(+). Its function is as follows. Snake venom phospholipase A2 (PLA2) that potently inhibits ADP-(IC(50)=12 nM) and collagen-induced (IC(50)=4 nM) platelet aggregation when tested on human whole blood. PLA2 catalyzes the calcium-dependent hydrolysis of the 2-acyl groups in 3-sn-phosphoglycerides. The chain is Basic phospholipase A2 acanthin-2 from Acanthophis antarcticus (Common death adder).